We begin with the raw amino-acid sequence, 818 residues long: Exchange factor for Arf-6 (818 aa).

Disordered stretches follow at residues A92–P123, M137–D168, N208–N291, and R326–E383. The segment covering I107 to E119 has biased composition (basic and acidic residues). A compositionally biased stretch (acidic residues) spans T140–T149. Over residues T154–E165 the composition is skewed to basic and acidic residues. Composition is skewed to polar residues over residues Y213–S223 and M255–N269. The span at R326–T347 shows a compositional bias: low complexity. The region spanning G356–N532 is the SEC7 domain. A compositionally biased stretch (polar residues) spans S361–V380. Residues V569–A681 enclose the PH domain. Residues T782–P799 show a composition bias toward polar residues. Positions T782 to H818 are disordered.

As to quaternary structure, interacts (via short N-terminal region) with microtubule-associated proteins tac-1 and zyg-8.

It is found in the cytoplasm. The protein localises to the cell cortex. The protein resides in the cell membrane. Guanine nucleotide exchange factor for arf-6. Involved in response to injury in mechanosensory neurons. Inhibits axon regrowth via microtubule dynamics, possibly by inducing axonal microtubule catastrophes. Limits microtubule growth near the cellular cortex of early embryonic cells. In Caenorhabditis elegans, this protein is Exchange factor for Arf-6.